The following is a 60-amino-acid chain: Metallothionein (60 aa).

The interval 1 to 28 (MDPCECSKGGTCNCGGSCTCTNCSCTTC) is beta. A divalent metal cation is bound by residues Cys-4, Cys-6, Cys-12, Cys-14, Cys-18, Cys-20, Cys-23, Cys-25, Cys-28, Cys-32, Cys-33, Cys-35, Cys-36, Cys-40, Cys-43, Cys-47, Cys-49, Cys-54, Cys-58, and Cys-59. The segment at 29–60 (KKSCCPCCPSGCPKCASGCVCKGKTCDAACCQ) is alpha.

It belongs to the metallothionein superfamily. Type 1 family.

Functionally, metallothioneins have a high content of cysteine residues that bind various heavy metals. This chain is Metallothionein (mt), found in Perca fluviatilis (European perch).